Consider the following 156-residue polypeptide: Ribosomal RNA large subunit methyltransferase H (156 aa).

S-adenosyl-L-methionine contacts are provided by residues L73, G104, and 123–128 (LGALTL).

The protein belongs to the RNA methyltransferase RlmH family. In terms of assembly, homodimer.

It is found in the cytoplasm. It carries out the reaction pseudouridine(1915) in 23S rRNA + S-adenosyl-L-methionine = N(3)-methylpseudouridine(1915) in 23S rRNA + S-adenosyl-L-homocysteine + H(+). In terms of biological role, specifically methylates the pseudouridine at position 1915 (m3Psi1915) in 23S rRNA. The chain is Ribosomal RNA large subunit methyltransferase H from Dichelobacter nodosus (strain VCS1703A).